A 378-amino-acid polypeptide reads, in one-letter code: 4-hydroxy-3-methylbut-2-en-1-yl diphosphate synthase (flavodoxin) (378 aa).

Residues Cys-268, Cys-271, Cys-303, and Glu-310 each coordinate [4Fe-4S] cluster.

It belongs to the IspG family. [4Fe-4S] cluster is required as a cofactor.

The catalysed reaction is (2E)-4-hydroxy-3-methylbut-2-enyl diphosphate + oxidized [flavodoxin] + H2O + 2 H(+) = 2-C-methyl-D-erythritol 2,4-cyclic diphosphate + reduced [flavodoxin]. Its pathway is isoprenoid biosynthesis; isopentenyl diphosphate biosynthesis via DXP pathway; isopentenyl diphosphate from 1-deoxy-D-xylulose 5-phosphate: step 5/6. Its function is as follows. Converts 2C-methyl-D-erythritol 2,4-cyclodiphosphate (ME-2,4cPP) into 1-hydroxy-2-methyl-2-(E)-butenyl 4-diphosphate. The sequence is that of 4-hydroxy-3-methylbut-2-en-1-yl diphosphate synthase (flavodoxin) from Corynebacterium efficiens (strain DSM 44549 / YS-314 / AJ 12310 / JCM 11189 / NBRC 100395).